A 39-amino-acid polypeptide reads, in one-letter code: Natriuretic peptide TcNPa (39 aa).

The propeptide occupies 1–8 (SGSETAKI). C12 and C28 are oxidised to a cystine. T35 is a glycosylation site (O-linked (GalNAc...) threonine).

The protein belongs to the natriuretic peptide family. O-linked glycans consist of galactosyl-beta(1-3)-N-acetylgalactosamine (Gal-GalNAc). In terms of processing, the synthetic non-glycosylated form shows higher potency on natriuretic receptors (EC(50)=672.90 nM) and NPR2 (EC(50)=261.0 nM). As to expression, expressed by the venom gland.

The protein resides in the secreted. Functionally, snake venom natriuretic peptide that targets both NPR1 (EC(50)=1080.0 nM) and NPR2 (EC(50)=328.60 nM). Exhibits hypotensive and vasodepressor activities. This chain is Natriuretic peptide TcNPa, found in Tropidechis carinatus (Australian rough-scaled snake).